The following is a 309-amino-acid chain: Homoserine kinase (309 aa).

ATP is bound at residue 95 to 105 (PQSRGLGSSAA).

This sequence belongs to the GHMP kinase family. Homoserine kinase subfamily.

The protein resides in the cytoplasm. The catalysed reaction is L-homoserine + ATP = O-phospho-L-homoserine + ADP + H(+). The protein operates within amino-acid biosynthesis; L-threonine biosynthesis; L-threonine from L-aspartate: step 4/5. Catalyzes the ATP-dependent phosphorylation of L-homoserine to L-homoserine phosphate. This chain is Homoserine kinase, found in Corynebacterium glutamicum (strain R).